The chain runs to 415 residues: Fructose-1,6-bisphosphatase, chloroplastic (415 aa).

Residues 1-57 (MASIGPATTTAVKLRSSIFNPQSSTLSPSQQCITFTKSLHSFPTATRHNVASGVRCM) constitute a chloroplast transit peptide. Mg(2+)-binding residues include Glu-135, Glu-164, Asp-185, Leu-187, and Asp-188. Residue 188–191 (DGSS) coordinates substrate. The involved in light regulation stretch occupies residues 207–232 (SPNDECIVDSDHDDESQLSAEEQRCV). Cysteines 231 and 236 form a disulfide. 5 residues coordinate substrate: Asn-295, Tyr-327, Tyr-345, Tyr-347, and Lys-357. Glu-363 contributes to the Mg(2+) binding site.

Belongs to the FBPase class 1 family. As to quaternary structure, homotetramer. The cofactor is Mg(2+).

Its subcellular location is the plastid. The protein resides in the chloroplast. It carries out the reaction beta-D-fructose 1,6-bisphosphate + H2O = beta-D-fructose 6-phosphate + phosphate. It functions in the pathway carbohydrate biosynthesis; Calvin cycle. This Spinacia oleracea (Spinach) protein is Fructose-1,6-bisphosphatase, chloroplastic.